Consider the following 196-residue polypeptide: ATP-dependent Clp protease proteolytic subunit (196 aa).

Ser-101 functions as the Nucleophile in the catalytic mechanism. The active site involves His-126.

The protein belongs to the peptidase S14 family. As to quaternary structure, component of the chloroplastic Clp protease core complex.

The protein localises to the plastid. It localises to the chloroplast stroma. The enzyme catalyses Hydrolysis of proteins to small peptides in the presence of ATP and magnesium. alpha-casein is the usual test substrate. In the absence of ATP, only oligopeptides shorter than five residues are hydrolyzed (such as succinyl-Leu-Tyr-|-NHMec, and Leu-Tyr-Leu-|-Tyr-Trp, in which cleavage of the -Tyr-|-Leu- and -Tyr-|-Trp bonds also occurs).. Cleaves peptides in various proteins in a process that requires ATP hydrolysis. Has a chymotrypsin-like activity. Plays a major role in the degradation of misfolded proteins. This is ATP-dependent Clp protease proteolytic subunit from Gossypium barbadense (Sea Island cotton).